Consider the following 166-residue polypeptide: Protein TIFY 11e (166 aa).

One can recognise a Tify domain in the interval 65–100 (ASSAAAQMTIFYGGRVLVLDECPADRAAALLRLAAS). Positions 123–148 (PVARKASLQRFMEKRKGRLAARGQPY) match the Jas motif. A Nuclear localization signal motif is present at residues 125 to 132 (ARKASLQR).

It belongs to the TIFY/JAZ family. In terms of processing, ubiquitinated. Targeted for degradation by the SCF(COI1) E3 ubiquitin ligase-proteasome pathway during jasmonate signaling.

The protein resides in the nucleus. Repressor of jasmonate responses. The protein is Protein TIFY 11e of Oryza sativa subsp. japonica (Rice).